Consider the following 178-residue polypeptide: Fatty-acid and retinol-binding protein 1 (178 aa).

The N-terminal stretch at 1–16 is a signal peptide; the sequence is MYHRLILLALVGTTMA. 2 coiled-coil regions span residues 67 to 89 and 130 to 153; these read DAAL…ELRN and KQAA…ELKV.

It belongs to the fatty-acid and retinol-binding protein (FARBP) family. In terms of processing, not glycosylated.

The protein resides in the secreted. In terms of biological role, binds retinol and different fatty acids. The polypeptide is Fatty-acid and retinol-binding protein 1 (Brugia pahangi (Filarial nematode worm)).